Consider the following 252-residue polypeptide: Cell division protein ZapD (252 aa).

This sequence belongs to the ZapD family. As to quaternary structure, interacts with FtsZ.

Its subcellular location is the cytoplasm. Cell division factor that enhances FtsZ-ring assembly. Directly interacts with FtsZ and promotes bundling of FtsZ protofilaments, with a reduction in FtsZ GTPase activity. This is Cell division protein ZapD from Dechloromonas aromatica (strain RCB).